Here is a 488-residue protein sequence, read N- to C-terminus: MKILMRADTHVSYSVPAEGTKANFTFSQVLAALSVSLCSLVVGFVSAYTSPALVSMTDRTITSFEVTKDAGSWVGGIMPLAALAGGITGGPLIEYLGRRNTILATAVPFIVSSLLIACAVNVIMILCGRFLTGFCVGIASLSLPVYLGETLQPEVRGTLGLLPTALGNIGILVCYVAGSFMNWSILAFLGAALPVPFLILMIIIPETPRWFVNRGQEERARKALKWLRGKEADVEPELKDLMQSQAEADSQATRNTCLELFKRINLKPLSISLGLMFFQQFSGINAVIFYTVQIFKDAGSTIDSNLCTIIVGIVNFFATFMGIILIDRLGRKILLYVSDIAMILTLSILGGFFYCKAHGPDVSHLGWLPLSCFVIYILGFSLGFGPIPWLMMGEILPAKIRGPAASVVTAFNWFCTFVVTKTFQDLTVAMGPHGAFWLFGVVCIVGLFFVIIYVPETRGKSLEEIERKMMGRVPISAVVNIKPFSFNM.

The Cytoplasmic segment spans residues 1-28; the sequence is MKILMRADTHVSYSVPAEGTKANFTFSQ. The chain crosses the membrane as a helical span at residues 29–49; it reads VLAALSVSLCSLVVGFVSAYT. Residues 50 to 72 are Extracellular-facing; sequence SPALVSMTDRTITSFEVTKDAGS. A helical transmembrane segment spans residues 73-93; the sequence is WVGGIMPLAALAGGITGGPLI. Residues 94-105 lie on the Cytoplasmic side of the membrane; sequence EYLGRRNTILAT. Residues 106 to 126 form a helical membrane-spanning segment; sequence AVPFIVSSLLIACAVNVIMIL. Residues 127–129 are Extracellular-facing; that stretch reads CGR. A helical membrane pass occupies residues 130–150; that stretch reads FLTGFCVGIASLSLPVYLGET. Topologically, residues 151-160 are cytoplasmic; the sequence is LQPEVRGTLG. A helical membrane pass occupies residues 161–181; sequence LLPTALGNIGILVCYVAGSFM. The N-linked (GlcNAc...) asparagine glycan is linked to Asn-182. The Extracellular segment spans residues 182-184; the sequence is NWS. A helical membrane pass occupies residues 185-205; it reads ILAFLGAALPVPFLILMIIIP. Over 206 to 268 the chain is Cytoplasmic; it reads ETPRWFVNRG…ELFKRINLKP (63 aa). Residues 269–289 form a helical membrane-spanning segment; that stretch reads LSISLGLMFFQQFSGINAVIF. At 290–305 the chain is on the extracellular side; sequence YTVQIFKDAGSTIDSN. The chain crosses the membrane as a helical span at residues 306 to 326; sequence LCTIIVGIVNFFATFMGIILI. The Cytoplasmic segment spans residues 327–332; it reads DRLGRK. The helical transmembrane segment at 333–353 threads the bilayer; it reads ILLYVSDIAMILTLSILGGFF. Residues 354-372 are Extracellular-facing; it reads YCKAHGPDVSHLGWLPLSC. Residues 373-393 form a helical membrane-spanning segment; that stretch reads FVIYILGFSLGFGPIPWLMMG. Residues 394–402 lie on the Cytoplasmic side of the membrane; it reads EILPAKIRG. A helical transmembrane segment spans residues 403–423; the sequence is PAASVVTAFNWFCTFVVTKTF. The Extracellular portion of the chain corresponds to 424-433; that stretch reads QDLTVAMGPH. The helical transmembrane segment at 434–454 threads the bilayer; sequence GAFWLFGVVCIVGLFFVIIYV. At 455–488 the chain is on the cytoplasmic side; that stretch reads PETRGKSLEEIERKMMGRVPISAVVNIKPFSFNM.

This sequence belongs to the major facilitator superfamily. Sugar transporter (TC 2.A.1.1) family. Trehalose transporter subfamily.

Its subcellular location is the cell membrane. Functionally, fails to transport trehalose. This Drosophila sechellia (Fruit fly) protein is Facilitated trehalose transporter Tret1-2 homolog.